The chain runs to 175 residues: Calcineurin subunit B (175 aa).

EF-hand domains are found at residues 21 to 56, 58 to 88, 90 to 125, and 131 to 166; these read AEIE…SANP, AKRI…FSGR, ETDA…MVGT, and QLQQ…TEVI. Residues aspartate 34, aspartate 36, serine 38, serine 40, glutamate 45, aspartate 66, aspartate 68, serine 70, aspartate 72, glutamate 77, aspartate 103, aspartate 105, aspartate 107, tyrosine 109, glutamate 114, aspartate 144, aspartate 146, aspartate 148, lysine 150, and glutamate 155 each coordinate Ca(2+).

The protein belongs to the calcineurin regulatory subunit family. In terms of assembly, composed of a catalytic subunit (A) and a regulatory subunit (B).

In terms of biological role, regulatory subunit of calcineurin, a calcium-dependent, calmodulin stimulated protein phosphatase. Confers calcium sensitivity. In Kluyveromyces lactis (strain ATCC 8585 / CBS 2359 / DSM 70799 / NBRC 1267 / NRRL Y-1140 / WM37) (Yeast), this protein is Calcineurin subunit B (CNB1).